The sequence spans 328 residues: MSGAESYRHITVLLNEAVDALAVREDGVYVDGTFGRGGHSRLILSRLGDAGRLIVFDKDPQAIAVAEELARSDKRVGVVHGGFASFQTALDGLGIGKVDGALFDLGISSPQIDDGSRGFSFRFDAPLDMRMDTTRGMSAAEWIAVASEQDLHEVIKNYGEERFSRQIARAIVAQRAESPIDTTRKLAQIVAQNVRTRERGQDPATRTFQAIRIFINRELEEVGAVLPQVMCRLKEGGRLAVIAFHSLEDRIVKQFVKKYSQHAPLPRWAAVREADLPEPPLKIAGRALKPGEAEIAANPRARSAVLRVAERTAGPIPEQSQRKTSEWQ.

S-adenosyl-L-methionine contacts are provided by residues 37–39 (GGH), aspartate 57, phenylalanine 83, aspartate 104, and glutamine 111.

Belongs to the methyltransferase superfamily. RsmH family.

The protein localises to the cytoplasm. It carries out the reaction cytidine(1402) in 16S rRNA + S-adenosyl-L-methionine = N(4)-methylcytidine(1402) in 16S rRNA + S-adenosyl-L-homocysteine + H(+). Specifically methylates the N4 position of cytidine in position 1402 (C1402) of 16S rRNA. The protein is Ribosomal RNA small subunit methyltransferase H of Neisseria meningitidis serogroup A / serotype 4A (strain DSM 15465 / Z2491).